A 311-amino-acid chain; its full sequence is MTGSIEKPRLIVVMGPTAVGKTAAAIRLAKQWGGEIISADSMQVYRHMDIGTAKPTPDQQCRVPHHLIDIVNPDESFNAACFMERARAVIAELHKRGKKIIVVGGTGLYIRAVLGGLFDGPAADEALRRHYFTILEREGKAGLYGMLKARDRRAAAIIHPNDTTRMIRALEVLDLTGVSIVEQQQEHRFAQRPYRVLKIGLRCSRSVLYERIEARTEEMLAQGFLDEVRQLLDMGFHEGLRPMQALGYRQMVGFLKGELDLDEAVDQLKRETRRYAKRQLTWFGADPEIRWFEPGNEEEILRYAGRFLRGE.

15–22 (GPTAVGKT) provides a ligand contact to ATP. 17–22 (TAVGKT) contributes to the substrate binding site. The interval 40-43 (DSMQ) is interaction with substrate tRNA.

Belongs to the IPP transferase family. In terms of assembly, monomer. The cofactor is Mg(2+).

The enzyme catalyses adenosine(37) in tRNA + dimethylallyl diphosphate = N(6)-dimethylallyladenosine(37) in tRNA + diphosphate. Its function is as follows. Catalyzes the transfer of a dimethylallyl group onto the adenine at position 37 in tRNAs that read codons beginning with uridine, leading to the formation of N6-(dimethylallyl)adenosine (i(6)A). This is tRNA dimethylallyltransferase 2 from Syntrophus aciditrophicus (strain SB).